Here is a 51-residue protein sequence, read N- to C-terminus: Methionine aminopeptidase (51 aa).

The protein belongs to the peptidase M24A family. Methionine aminopeptidase type 1 subfamily. Monomer. Co(2+) is required as a cofactor. It depends on Zn(2+) as a cofactor. The cofactor is Mn(2+). Requires Fe(2+) as cofactor.

It catalyses the reaction Release of N-terminal amino acids, preferentially methionine, from peptides and arylamides.. Functionally, removes the N-terminal methionine from nascent proteins. The N-terminal methionine is often cleaved when the second residue in the primary sequence is small and uncharged (Met-Ala-, Cys, Gly, Pro, Ser, Thr, or Val). Requires deformylation of the N(alpha)-formylated initiator methionine before it can be hydrolyzed. The protein is Methionine aminopeptidase (map) of Geobacillus stearothermophilus (Bacillus stearothermophilus).